The primary structure comprises 473 residues: Trigger factor (473 aa).

The 82-residue stretch at 162–243 (GDFVSIDLSA…VKSIKVRELP (82 aa)) folds into the PPIase FKBP-type domain. The interval 433 to 473 (TAEFFGPSGEQAEAEQDEAAPAEDATEETDADSDEAADDSK) is disordered. Positions 444 to 473 (AEAEQDEAAPAEDATEETDADSDEAADDSK) are enriched in acidic residues.

This sequence belongs to the FKBP-type PPIase family. Tig subfamily.

It localises to the cytoplasm. It catalyses the reaction [protein]-peptidylproline (omega=180) = [protein]-peptidylproline (omega=0). In terms of biological role, involved in protein export. Acts as a chaperone by maintaining the newly synthesized protein in an open conformation. Functions as a peptidyl-prolyl cis-trans isomerase. The sequence is that of Trigger factor from Mycolicibacterium vanbaalenii (strain DSM 7251 / JCM 13017 / BCRC 16820 / KCTC 9966 / NRRL B-24157 / PYR-1) (Mycobacterium vanbaalenii).